The chain runs to 1217 residues: ATP-dependent helicase/nuclease subunit A (1217 aa).

The UvrD-like helicase ATP-binding domain maps to 10 to 475; the sequence is VIWTDAQWQS…IDLSQNFRSR (466 aa). Position 31-38 (31-38) interacts with ATP; sequence AAAGSGKT. One can recognise a UvrD-like helicase C-terminal domain in the interval 476 to 786; that stretch reads KEVLSTTNYI…RMMTIHSSKG (311 aa).

The protein belongs to the helicase family. AddA subfamily. Heterodimer of AddA and AddB/RexB. Mg(2+) serves as cofactor.

It catalyses the reaction Couples ATP hydrolysis with the unwinding of duplex DNA by translocating in the 3'-5' direction.. It carries out the reaction ATP + H2O = ADP + phosphate + H(+). Its function is as follows. The heterodimer acts as both an ATP-dependent DNA helicase and an ATP-dependent, dual-direction single-stranded exonuclease. Recognizes the chi site generating a DNA molecule suitable for the initiation of homologous recombination. The AddA nuclease domain is required for chi fragment generation; this subunit has the helicase and 3' -&gt; 5' nuclease activities. The chain is ATP-dependent helicase/nuclease subunit A from Staphylococcus aureus (strain MSSA476).